An 895-amino-acid polypeptide reads, in one-letter code: La RNA-binding domain-containing protein LHP1 (895 aa).

5 disordered regions span residues 24–265, 285–344, 359–590, 796–857, and 870–895; these read ANGN…PPPS, SATS…HDAT, GEDK…LGHG, PDAA…AQDV, and VNGE…NYEQ. Positions 31-75 are enriched in low complexity; the sequence is SSPSSSSSATPEPTSLSSSTSGKKAFSTATSKSGQQKQGSSPQPG. Positions 95-143 are enriched in basic and acidic residues; the sequence is QRTDRSEEKEKRGSSSKNWRERSHRDEKNQDDGEKRNGRERSKKEKGDK. Over residues 152–170 the composition is skewed to low complexity; it reads SATSSEKTAKSLSSSTKNA. Composition is skewed to polar residues over residues 172–184 and 192–216; these read GVTS…NPIA and KAQN…STIN. Residues 228–244 are compositionally biased toward basic and acidic residues; sequence DNWRARPAKVEKNEKTE. Over residues 251 to 260 the composition is skewed to low complexity; the sequence is QAQPQPQRQL. The span at 296 to 314 shows a compositional bias: basic and acidic residues; it reads KSDKEKSLTNGMVKEEDSG. The segment covering 325 to 336 has biased composition (low complexity); sequence AAAAAAAGTSST. Basic and acidic residues-rich tracts occupy residues 359–371, 405–428, 452–468, and 485–495; these read GEDK…ERLN, HAAE…REGG, EGKK…DGHA, and GDVKETKEGDA. Positions 496–508 are enriched in low complexity; the sequence is RSASQQESSSHRS. Positions 510-521 are enriched in polar residues; sequence PSISASANTGID. Residues 563–572 are compositionally biased toward gly residues; that stretch reads RGSFGGGRAR. The region spanning 706-796 is the HTH La-type RNA-binding domain; that stretch reads VPNLDPLRFY…GAESHRWVLP (91 aa). At S847 the chain carries Phosphoserine. A compositionally biased stretch (basic and acidic residues) spans 873–884; that stretch reads EIKEKEEVKAME. The span at 885–895 shows a compositional bias: acidic residues; sequence NEGEESENYEQ.

In terms of biological role, may act as an RNA-binding protein. The chain is La RNA-binding domain-containing protein LHP1 from Cryptococcus neoformans var. grubii serotype A (strain H99 / ATCC 208821 / CBS 10515 / FGSC 9487) (Filobasidiella neoformans var. grubii).